The chain runs to 235 residues: Purine nucleoside phosphorylase DeoD-type (235 aa).

A purine D-ribonucleoside is bound at residue H4. Phosphate-binding positions include G20, R24, R43, and 87–90; that span reads RVGT. Residues E162, 179-181, and 203-204 contribute to the a purine D-ribonucleoside site; these read EME and SD. D204 acts as the Proton donor in catalysis.

This sequence belongs to the PNP/UDP phosphorylase family. As to quaternary structure, homohexamer; trimer of homodimers.

It carries out the reaction a purine D-ribonucleoside + phosphate = a purine nucleobase + alpha-D-ribose 1-phosphate. The catalysed reaction is a purine 2'-deoxy-D-ribonucleoside + phosphate = a purine nucleobase + 2-deoxy-alpha-D-ribose 1-phosphate. Functionally, catalyzes the reversible phosphorolytic breakdown of the N-glycosidic bond in the beta-(deoxy)ribonucleoside molecules, with the formation of the corresponding free purine bases and pentose-1-phosphate. The polypeptide is Purine nucleoside phosphorylase DeoD-type (Bacillus cereus (strain ATCC 14579 / DSM 31 / CCUG 7414 / JCM 2152 / NBRC 15305 / NCIMB 9373 / NCTC 2599 / NRRL B-3711)).